A 324-amino-acid chain; its full sequence is Tubulin alpha-8 chain (324 aa).

The GTP site is built by serine 15, glycine 19, threonine 20, threonine 54, asparagine 81, and asparagine 103. Residue glutamate 129 is part of the active site.

This sequence belongs to the tubulin family. As to quaternary structure, dimer of alpha and beta chains. A typical microtubule is a hollow water-filled tube with an outer diameter of 25 nm and an inner diameter of 15 nM. Alpha-beta heterodimers associate head-to-tail to form protofilaments running lengthwise along the microtubule wall with the beta-tubulin subunit facing the microtubule plus end conferring a structural polarity. Microtubules usually have 13 protofilaments but different protofilament numbers can be found in some organisms and specialized cells. Requires Mg(2+) as cofactor. In terms of processing, some glutamate residues at the C-terminus are polyglycylated, resulting in polyglycine chains on the gamma-carboxyl group. Glycylation is mainly limited to tubulin incorporated into axonemes (cilia and flagella) whereas glutamylation is prevalent in neuronal cells, centrioles, axonemes, and the mitotic spindle. Both modifications can coexist on the same protein on adjacent residues, and lowering polyglycylation levels increases polyglutamylation, and reciprocally. The precise function of polyglycylation is still unclear. Post-translationally, some glutamate residues at the C-terminus are polyglutamylated, resulting in polyglutamate chains on the gamma-carboxyl group. Polyglutamylation plays a key role in microtubule severing by spastin (SPAST). SPAST preferentially recognizes and acts on microtubules decorated with short polyglutamate tails: severing activity by SPAST increases as the number of glutamates per tubulin rises from one to eight, but decreases beyond this glutamylation threshold.

It localises to the cytoplasm. It is found in the cytoskeleton. It catalyses the reaction GTP + H2O = GDP + phosphate + H(+). In terms of biological role, tubulin is the major constituent of microtubules, a cylinder consisting of laterally associated linear protofilaments composed of alpha- and beta-tubulin heterodimers. Microtubules grow by the addition of GTP-tubulin dimers to the microtubule end, where a stabilizing cap forms. Below the cap, tubulin dimers are in GDP-bound state, owing to GTPase activity of alpha-tubulin. The sequence is that of Tubulin alpha-8 chain from Gallus gallus (Chicken).